We begin with the raw amino-acid sequence, 77 residues long: Large ribosomal subunit protein eL14 (77 aa).

Belongs to the eukaryotic ribosomal protein eL14 family.

The protein is Large ribosomal subunit protein eL14 of Methanococcus maripaludis (strain C7 / ATCC BAA-1331).